We begin with the raw amino-acid sequence, 94 residues long: MAKNLSAIKRIKTSERNRLINRKYKSVVKTLTKRCLMNIENLENSNLNDVQLSISQVYSKIDKAIKKGAFHPNTGARKKARLARIFAYAQKQQN.

Belongs to the bacterial ribosomal protein bS20 family.

The protein resides in the plastid. It is found in the chloroplast. Its function is as follows. Binds directly to 16S ribosomal RNA. In Porphyra purpurea (Red seaweed), this protein is Small ribosomal subunit protein bS20c.